We begin with the raw amino-acid sequence, 214 residues long: MVDEDRITLAPTEIYGRSDEEQSGPRIWRRKTEEPPGKCLVYSLTIIVIIFALCLILSSIFLRISKPEIETRSISTRDLRSGGNSTNPYFNATLVSDISIRNSNFGAFEFEDSTLRVVYADHGVVGETKIEGRRVEAHKTVRITGVVVEIGSFRLLDTKDLDKDLRLGFLELRSVAEVRGRIKVLGRKRWKVSVMSCTMRLNLTGRFIQNLLCE.

A helical membrane pass occupies residues 41–61 (VYSLTIIVIIFALCLILSSIF).

It belongs to the LEA type 2 family.

The protein resides in the membrane. In Arabidopsis thaliana (Mouse-ear cress), this protein is Late embryogenesis abundant protein At1g64065.